Reading from the N-terminus, the 447-residue chain is Crotonyl-CoA reductase (447 aa).

It belongs to the zinc-containing alcohol dehydrogenase family. Crotonyl-CoA carboxylase/reductase subfamily. In terms of assembly, homodimer.

It catalyses the reaction butanoyl-CoA + NADP(+) = (2E)-butenoyl-CoA + NADPH + H(+). Its activity is regulated as follows. Inhibited by divalent cations (30-100%), beta-chloromercuribenzoate (85%), iodoacetamide (40%) and N-ethylmaleamide (80%). The presence of CoA thioesters containing 12-20 carbon atoms results in inhibition of enzyme activity. The greatest degree of inhibition is observed in the presence of palmitoyl-CoA and myristoyl-CoA. The branched-chain fatty acids, isopalmitoyl-CoA and isomyristoyl-CoA are less effective inhibitors of the crotonyl-CoA reductase. Concentrations of NADPH above 200 uM lead to inhibition of enzyme activity. Functionally, may play a role in supplying butyryl-CoA for straight-chain fatty acid biosynthesis. Catalyzes the conversion of crotonyl-CoA to butyryl-CoA. It shows a high substrate specificity for crotonyl-CoA, a short-chain-length (C4), but no measurable activity is observed with shorter (C3) or longer-chain-length enoyl-CoA thioesters. The sequence is that of Crotonyl-CoA reductase (ccr) from Streptomyces collinus.